The sequence spans 379 residues: Succinyl-diaminopimelate desuccinylase (379 aa).

H68 provides a ligand contact to Zn(2+). D70 is a catalytic residue. D101 is a Zn(2+) binding site. E135 (proton acceptor) is an active-site residue. Positions 136, 164, and 350 each coordinate Zn(2+).

The protein belongs to the peptidase M20A family. DapE subfamily. Homodimer. Zn(2+) serves as cofactor. The cofactor is Co(2+).

It catalyses the reaction N-succinyl-(2S,6S)-2,6-diaminopimelate + H2O = (2S,6S)-2,6-diaminopimelate + succinate. The protein operates within amino-acid biosynthesis; L-lysine biosynthesis via DAP pathway; LL-2,6-diaminopimelate from (S)-tetrahydrodipicolinate (succinylase route): step 3/3. Its function is as follows. Catalyzes the hydrolysis of N-succinyl-L,L-diaminopimelic acid (SDAP), forming succinate and LL-2,6-diaminopimelate (DAP), an intermediate involved in the bacterial biosynthesis of lysine and meso-diaminopimelic acid, an essential component of bacterial cell walls. In Bordetella pertussis (strain Tohama I / ATCC BAA-589 / NCTC 13251), this protein is Succinyl-diaminopimelate desuccinylase.